A 277-amino-acid chain; its full sequence is MDNNETSVDSKSINNFETKTIHGSKSMDSGIYLDSSYKMDYPEMGLCIIINNKNFHKSTGMSARNGTDVDAANLRETFMALKYEVRNKNDLTREEIMELMDSVSKEDHSKRSSFVCVILSHGDEGVIFGTNGPVDLKKLTSFFRGDYCRSLTGKPKLFIIQACRGTELDCGIETDSGTDDDMACQKIPVEADFLYAYSTAPGYYSWRNSRDGSWFIQSLCAMLKLYAHKLEFMHILTRVNRKVATEFESFSLDATFHAKKQIPCIVSMLTKELYFYH.

Met1 carries the N-acetylmethionine modification. 2 consecutive propeptides follow at residues 1-9 and 10-28; these read MDNNETSVD and SKSINNFETKTIHGSKSMD. Lys11 carries the N6-acetyllysine modification. Ser26 carries the post-translational modification Phosphoserine. Catalysis depends on residues His121 and Cys163. S-nitrosocysteine; in inhibited form is present on Cys163.

This sequence belongs to the peptidase C14A family. In terms of assembly, heterotetramer that consists of two anti-parallel arranged heterodimers, each one formed by a 17 kDa (p17) and a 12 kDa (p12) subunit. Interacts with BIRC6/bruce. Post-translationally, cleavage by granzyme B, caspase-6, caspase-8 and caspase-10 generates the two active subunits. Additional processing of the propeptides is likely due to the autocatalytic activity of the activated protease. Active heterodimers between the small subunit of caspase-7 protease and the large subunit of caspase-3 also occur and vice versa. In terms of processing, S-nitrosylated on its catalytic site cysteine in unstimulated cell lines and denitrosylated upon activation of the Fas apoptotic pathway, associated with an increase in intracellular caspase activity. Fas therefore activates caspase-3 not only by inducing the cleavage of the caspase zymogen to its active subunits, but also by stimulating the denitrosylation of its active site thiol. Ubiquitinated by BIRC6; this activity is inhibited by DIABLO/SMAC. Expressed in heart, brain, liver, and muscle but not in kidney or testis.

The protein localises to the cytoplasm. The enzyme catalyses Strict requirement for an Asp residue at positions P1 and P4. It has a preferred cleavage sequence of Asp-Xaa-Xaa-Asp-|- with a hydrophobic amino-acid residue at P2 and a hydrophilic amino-acid residue at P3, although Val or Ala are also accepted at this position.. With respect to regulation, inhibited by BIRC6; following inhibition of BIRC6-caspase binding by DIABLO/SMAC, BIRC6 is subjected to caspase cleavage, leading to an increase in active caspases. In terms of biological role, involved in the activation cascade of caspases responsible for apoptosis execution. At the onset of apoptosis, it proteolytically cleaves poly(ADP-ribose) polymerase PARP1 at a '216-Asp-|-Gly-217' bond. Cleaves and activates sterol regulatory element binding proteins (SREBPs) between the basic helix-loop-helix leucine zipper domain and the membrane attachment domain. Cleaves and activates caspase-6, -7 and -9 (CASP6, CASP7 and CASP9, respectively). Cleaves and inactivates interleukin-18 (IL18). Triggers cell adhesion in sympathetic neurons through RET cleavage. Cleaves IL-1 beta between an Asp and an Ala, releasing the mature cytokine which is involved in a variety of inflammatory processes. Cleaves and inhibits serine/threonine-protein kinase AKT1 in response to oxidative stress. Acts as an inhibitor of type I interferon production during virus-induced apoptosis by mediating cleavage of antiviral proteins CGAS, IRF3 and MAVS, thereby preventing cytokine overproduction. Also involved in pyroptosis by mediating cleavage and activation of gasdermin-E (GSDME). Cleaves XRCC4 and phospholipid scramblase proteins XKR4, XKR8 and XKR9, leading to promote phosphatidylserine exposure on apoptotic cell surface. Cleaves BIRC6 following inhibition of BIRC6-caspase binding by DIABLO/SMAC. This Rattus norvegicus (Rat) protein is Caspase-3 (Casp3).